A 240-amino-acid chain; its full sequence is 7-cyano-7-deazaguanine synthase (240 aa).

18–28 contacts ATP; that stretch reads FSGGQDSTTCL. Residues Cys197, Cys206, Cys209, and Cys212 each contribute to the Zn(2+) site.

Belongs to the QueC family. It depends on Zn(2+) as a cofactor.

The catalysed reaction is 7-carboxy-7-deazaguanine + NH4(+) + ATP = 7-cyano-7-deazaguanine + ADP + phosphate + H2O + H(+). It participates in purine metabolism; 7-cyano-7-deazaguanine biosynthesis. Its function is as follows. Catalyzes the ATP-dependent conversion of 7-carboxy-7-deazaguanine (CDG) to 7-cyano-7-deazaguanine (preQ(0)). The polypeptide is 7-cyano-7-deazaguanine synthase (Shewanella putrefaciens (strain CN-32 / ATCC BAA-453)).